A 328-amino-acid chain; its full sequence is Methionyl-tRNA formyltransferase (328 aa).

121-124 (SLLP) contributes to the (6S)-5,6,7,8-tetrahydrofolate binding site.

This sequence belongs to the Fmt family.

The enzyme catalyses L-methionyl-tRNA(fMet) + (6R)-10-formyltetrahydrofolate = N-formyl-L-methionyl-tRNA(fMet) + (6S)-5,6,7,8-tetrahydrofolate + H(+). Its function is as follows. Attaches a formyl group to the free amino group of methionyl-tRNA(fMet). The formyl group appears to play a dual role in the initiator identity of N-formylmethionyl-tRNA by promoting its recognition by IF2 and preventing the misappropriation of this tRNA by the elongation apparatus. In Burkholderia thailandensis (strain ATCC 700388 / DSM 13276 / CCUG 48851 / CIP 106301 / E264), this protein is Methionyl-tRNA formyltransferase.